The primary structure comprises 834 residues: Protein argonaute (834 aa).

In terms of domain architecture, PAZ spans 210–326; that stretch reads SLLQILMEYT…LPIEFCFVVK (117 aa). One can recognise a Piwi domain in the interval 500–799; sequence YLFFILDKNS…VSNLARYQDV (300 aa).

The protein belongs to the argonaute family. Ago subfamily. In terms of assembly, ago1, chp1 and tas3 interact to form the core of the RNA-induced transcriptional silencing (RITS) complex. The RITS complex interacts with the RDRC complex via interaction between ago1 and hrr1. Clr4 has a role in mediating this interaction. Component of the argonaute siRNA chaperone (ARC) complex composed of ago1, arb1 and arb2. Interacts with arb1.

It localises to the cytoplasm. Its subcellular location is the nucleus. The protein localises to the chromosome. It is found in the centromere. The protein resides in the telomere. Functionally, required for G1 arrest and mating in response to nitrogen starvation. Ago1 regulation of cytokinesis and cell cycle checkpoints occurs downstream of dcr1. Required, indirectly, for regulated hyperphosphorylation of cdc2. Has a role in the RNA interference (RNAi) pathway which is important for heterochromatin formation, accurate chromosome segregation, centromere cohesion and telomere function during mitosis and meiosis. Required for silencing at the centromeres and for initiation of transcriptionally silent heterochromatin at the mating type locus. Promotes histone H3K9 methylation necessary for centromere function. Required for recruitment of swi6 and cohesin to an ectopic dg repeat. A member of the RNA-induced transcriptional silencing (RITS) complex which is involved in the biosynthesis of dsRNA from primer siRNAs provided by the RNA-directed RNA polymerase (RDRC) complex. Has ribonuclease H-like cleavage (slicing) activity towards target messages complementary to siRNA and can direct site-specific cleavage of RNA substrates via siRNA. Slicing activity is required for both post-transcriptional and transcriptional gene silencing as well as for histone H3 'Lys-10' methylation spreading, conversion of double-stranded siRNA to single-stranded siRNA and siRNA-dependent association of ago1 with chromatin. A member of the argonaute siRNA chaperone (ARC) complex which is required for histone H3K9 methylation, heterochromatin assembly and siRNA generation. The ARC complex contains mostly double-stranded siRNA. In Schizosaccharomyces pombe (strain 972 / ATCC 24843) (Fission yeast), this protein is Protein argonaute (ago1).